Reading from the N-terminus, the 181-residue chain is uncharacterized protein (181 aa).

This sequence belongs to the isochorismatase family.

This is an uncharacterized protein from Bacillus subtilis (strain 168).